A 1196-amino-acid chain; its full sequence is DNA excision repair protein ERCC-5 homolog (1196 aa).

Positions 1-78 (MGVQGLWKLL…RIRPIFVFDG (78 aa)) are N-domain. Position 30 (aspartate 30) interacts with Mg(2+). Residues 31-67 (ISIWLNQAVKGARDRQGNAIQNAHLLTLFHRLCKLLF) form a DNA-binding; may bind to the undamaged single-strand DNA of the DNA repair bubble region. Residue aspartate 77 participates in Mg(2+) binding. Residues 79–818 (EAPLLKRQTL…LQLFGIPYIV (740 aa)) form a spacer region region. Disordered stretches follow at residues 152–176 (PLED…MNQK), 302–321 (KQEE…NSSQ), 629–661 (QTTQ…SSAM), and 722–758 (AVEE…DDVS). Positions 154–168 (EDNENNSSEEEEERE) are enriched in acidic residues. Residues 311–321 (PPQSITFNSSQ) are compositionally biased toward polar residues. The span at 722 to 731 (AVEEGNSGSQ) shows a compositional bias: polar residues. The segment covering 734 to 755 (PLEHDSGEPHEQSNSEESKDLD) has biased composition (basic and acidic residues). Residues 819–914 (APMEAEAQCA…VSAMEILNEF (96 aa)) form an I-domain region. Mg(2+)-binding residues include glutamate 822, glutamate 824, aspartate 843, and aspartate 845. The tract at residues 853–869 (HVYKNFFSQNKHVEYYQ) is DNA-binding; may bind to the undamaged single-strand DNA of the DNA repair bubble. The tract at residues 881–913 (RSKLINLAYLLGSDYTEGIPTVGYVSAMEILNE) is DNA-binding; H2TH (helix-2turn-helix) motif which binds double-stranded DNA. Residue aspartate 894 coordinates Mg(2+). The tract at residues 945–951 (TKVKKKL) is DNA-binding; may bind double-stranded DNA. Residues 1075-1196 (CTNQRKGQKT…KTMKETVKRK (122 aa)) are disordered. The short motif at 1079 to 1095 (RKGQKTNTKSQGTKRRK) is the Nuclear localization signal 1 element. The segment covering 1119 to 1130 (SSKAYSSDGSSS) has biased composition (low complexity). Over residues 1142-1158 (KQSQSGIVGRQKASNKV) the composition is skewed to polar residues. The Nuclear localization signal 2 signature appears at 1179–1196 (FQGKKTKSKTMKETVKRK).

Belongs to the XPG/RAD2 endonuclease family. XPG subfamily. In terms of assembly, monomer. Homodimer. It depends on Mg(2+) as a cofactor.

The protein localises to the nucleus. It localises to the chromosome. Single-stranded structure-specific DNA endonuclease involved in DNA excision repair. Makes the 3'incision in DNA nucleotide excision repair (NER). Binds and bends DNA repair bubble substrate and breaks base stacking at the single-strand/double-strand DNA junction of the DNA bubble. Plays a role in base excision repair (BER) by promoting the binding of DNA glycosylase to its substrate and increasing DNA glycosylase catalytic activity that removes oxidized pyrimidines from DNA. Involved in transcription-coupled nucleotide excision repair (TCR) which allows RNA polymerase II-blocking lesions to be rapidly removed from the transcribed strand of active genes. Required for DNA replication fork maintenance and preservation of genomic stability. Involved in homologous recombination repair (HRR) induced by DNA replication stress. During HRR, binds to the replication fork with high specificity and stabilizes it. The polypeptide is DNA excision repair protein ERCC-5 homolog (ercc5) (Xenopus laevis (African clawed frog)).